We begin with the raw amino-acid sequence, 112 residues long: 2Fe-2S ferredoxin (112 aa).

One can recognise a 2Fe-2S ferredoxin-type domain in the interval 5 to 107 (IKVTFIINDE…GIKVRLPSAT (103 aa)). Positions 42, 48, 51, and 88 each coordinate [2Fe-2S] cluster.

Belongs to the adrenodoxin/putidaredoxin family. The cofactor is [2Fe-2S] cluster.

Ferredoxin are iron-sulfur proteins that transfer electrons in a wide variety of metabolic reactions. The polypeptide is 2Fe-2S ferredoxin (fdxB) (Rickettsia prowazekii (strain Madrid E)).